The sequence spans 117 residues: Large ribosomal subunit protein uL18 (117 aa).

The protein belongs to the universal ribosomal protein uL18 family. In terms of assembly, part of the 50S ribosomal subunit; part of the 5S rRNA/L5/L18/L25 subcomplex. Contacts the 5S and 23S rRNAs.

In terms of biological role, this is one of the proteins that bind and probably mediate the attachment of the 5S RNA into the large ribosomal subunit, where it forms part of the central protuberance. This chain is Large ribosomal subunit protein uL18, found in Actinobacillus succinogenes (strain ATCC 55618 / DSM 22257 / CCUG 43843 / 130Z).